Reading from the N-terminus, the 375-residue chain is Ornithine carbamoyltransferase, chloroplastic (375 aa).

Carbamoyl phosphate contacts are provided by residues 123-126 (SMRT), Arg-174, His-201, and Gln-204. Positions 232, 293, 297, and 298 each coordinate L-ornithine. The active-site Proton acceptor is Cys-333. Residues 333–334 (CL) and Arg-361 contribute to the carbamoyl phosphate site.

This sequence belongs to the aspartate/ornithine carbamoyltransferase superfamily. OTCase family. In terms of assembly, homotrimer.

It is found in the plastid. Its subcellular location is the chloroplast. It catalyses the reaction carbamoyl phosphate + L-ornithine = L-citrulline + phosphate + H(+). In Pisum sativum (Garden pea), this protein is Ornithine carbamoyltransferase, chloroplastic (ARGF).